Here is a 146-residue protein sequence, read N- to C-terminus: Anti-sigma F factor (146 aa).

Belongs to the anti-sigma-factor family.

The catalysed reaction is L-seryl-[protein] + ATP = O-phospho-L-seryl-[protein] + ADP + H(+). The enzyme catalyses L-threonyl-[protein] + ATP = O-phospho-L-threonyl-[protein] + ADP + H(+). Functionally, binds to sigma F and blocks its ability to form an RNA polymerase holoenzyme (E-sigma F). Phosphorylates SpoIIAA on a serine residue. This phosphorylation may enable SpoIIAA to act as an anti-anti-sigma factor that counteracts SpoIIAB and thus releases sigma F from inhibition. This Bacillus cereus (strain ATCC 14579 / DSM 31 / CCUG 7414 / JCM 2152 / NBRC 15305 / NCIMB 9373 / NCTC 2599 / NRRL B-3711) protein is Anti-sigma F factor.